A 498-amino-acid chain; its full sequence is AP2-like ethylene-responsive transcription factor AIL7 (498 aa).

Residues 186-195 are compositionally biased toward polar residues; sequence TSDQPLSCNN. Residues 186–220 form a disordered region; it reads TSDQPLSCNNGERGGNSNKKKTVSKKETSDDSKKK. Over residues 209–220 the composition is skewed to basic and acidic residues; the sequence is SKKETSDDSKKK. DNA-binding regions (AP2/ERF) lie at residues 231–297 and 333–391; these read IYRG…TNFP and IYRG…TNFE. Low complexity predominate over residues 422–451; sequence ESPSSSSSDHNLQQQQLLPSSSPSDQNPNS. Residues 422–452 form a disordered region; that stretch reads ESPSSSSSDHNLQQQQLLPSSSPSDQNPNSI.

Belongs to the AP2/ERF transcription factor family. AP2 subfamily. Interacts with HDG2, and possibly with HDG3, HDG7, ANL2, ATML1 and PDF2. As to expression, expressed in roots, seedlings, inflorescence, and siliques. Also detected at low levels in leaves.

The protein localises to the nucleus. Probably acts as a transcriptional activator. Binds to the GCC-box pathogenesis-related promoter element. May be involved in the regulation of gene expression by stress factors and by components of stress signal transduction pathways. This Arabidopsis thaliana (Mouse-ear cress) protein is AP2-like ethylene-responsive transcription factor AIL7.